A 121-amino-acid polypeptide reads, in one-letter code: Large ribosomal subunit protein uL18 (121 aa).

It belongs to the universal ribosomal protein uL18 family. In terms of assembly, part of the 50S ribosomal subunit; part of the 5S rRNA/L5/L18/L25 subcomplex. Contacts the 5S and 23S rRNAs.

Its function is as follows. This is one of the proteins that bind and probably mediate the attachment of the 5S RNA into the large ribosomal subunit, where it forms part of the central protuberance. The chain is Large ribosomal subunit protein uL18 from Streptococcus equi subsp. zooepidemicus (strain MGCS10565).